We begin with the raw amino-acid sequence, 490 residues long: Cyclin-A2-1 (490 aa).

The tract at residues 34–76 (FAPSVSLPARTERKQTAKGKTKRGALDEITSASTATSAPQPKR) is disordered. Polar residues predominate over residues 63 to 72 (TSASTATSAP).

Belongs to the cyclin family. Cyclin AB subfamily.

In Oryza sativa subsp. japonica (Rice), this protein is Cyclin-A2-1 (CYCA2-1).